A 353-amino-acid polypeptide reads, in one-letter code: Methylthioribose-1-phosphate isomerase (353 aa).

Substrate is bound by residues 48–50, Arg-94, and Gln-201; that span reads RGA. The Proton donor role is filled by Asp-242. 252–253 is a binding site for substrate; it reads NK.

The protein belongs to the eIF-2B alpha/beta/delta subunits family. MtnA subfamily.

The catalysed reaction is 5-(methylsulfanyl)-alpha-D-ribose 1-phosphate = 5-(methylsulfanyl)-D-ribulose 1-phosphate. It functions in the pathway amino-acid biosynthesis; L-methionine biosynthesis via salvage pathway; L-methionine from S-methyl-5-thio-alpha-D-ribose 1-phosphate: step 1/6. Functionally, catalyzes the interconversion of methylthioribose-1-phosphate (MTR-1-P) into methylthioribulose-1-phosphate (MTRu-1-P). The sequence is that of Methylthioribose-1-phosphate isomerase from Roseiflexus sp. (strain RS-1).